A 252-amino-acid chain; its full sequence is Coenzyme F420:L-glutamate ligase (252 aa).

Residues 11 to 14, 45 to 46, and K50 each bind GTP; these read MPLV and ET. A divalent metal cation is bound at residue D115. Residue N118 participates in GTP binding. A divalent metal cation contacts are provided by D156, T157, and Q214. A GTP-binding site is contributed by 212–219; the sequence is MGQADEGV.

It belongs to the CofE family. As to quaternary structure, homodimer. The cofactor is Mg(2+). Requires Mn(2+) as cofactor. K(+) is required as a cofactor.

It carries out the reaction oxidized coenzyme F420-0 + GTP + L-glutamate = oxidized coenzyme F420-1 + GDP + phosphate + H(+). The enzyme catalyses oxidized coenzyme F420-1 + GTP + L-glutamate = oxidized coenzyme F420-2 + GDP + phosphate + H(+). Its pathway is cofactor biosynthesis; coenzyme F420 biosynthesis. Functionally, catalyzes the GTP-dependent successive addition of two or more gamma-linked L-glutamates to the L-lactyl phosphodiester of 7,8-didemethyl-8-hydroxy-5-deazariboflavin (F420-0) to form coenzyme F420-0-glutamyl-glutamate (F420-2) or polyglutamated F420 derivatives. The protein is Coenzyme F420:L-glutamate ligase of Methanothermobacter thermautotrophicus (strain ATCC 29096 / DSM 1053 / JCM 10044 / NBRC 100330 / Delta H) (Methanobacterium thermoautotrophicum).